We begin with the raw amino-acid sequence, 647 residues long: Pumilio homolog 3 (647 aa).

Over residues 1–10 (MEVKGKKKIT) the composition is skewed to basic residues. The interval 1-123 (MEVKGKKKIT…KKKKELKQNR (123 aa)) is disordered. Residue Lys-33 is modified to N6-acetyllysine. Residues 59 to 68 (PGKKRVKQFK) are compositionally biased toward basic residues. Basic and acidic residues predominate over residues 93–123 (FQPDGKSDESAAKKPKWDDFKKKKKELKQNR). Positions 105-117 (KKPKWDDFKKKKK) match the Nuclear localization signal motif. In terms of domain architecture, PUM-HD spans 142–509 (ESLRRKDCDK…VVLDKSVCVL (368 aa)). 11 Pumilio repeats span residues 176 to 211 (HDST…LSKA), 212 to 247 (KYSR…MLRH), 248 to 276 (SEAS…ELYG), 288 to 324 (PTLE…VIKH), 325 to 360 (SLVH…LAHT), 361 to 396 (HDGA…IANG), 397 to 434 (QYSH…IVND), 435 to 503 (KYGR…VVLD), 504 to 550 (KSVC…IAEH), 551 to 595 (PAGH…WASI), and 596 to 635 (NRGA…KSTS).

In terms of assembly, interacts with PARP1 (via catalytic domain).

It is found in the nucleus. The protein resides in the nucleolus. Its subcellular location is the nucleoplasm. The protein localises to the chromosome. In terms of biological role, inhibits the poly(ADP-ribosyl)ation activity of PARP1 and the degradation of PARP1 by CASP3 following genotoxic stress. Binds to double-stranded RNA or DNA without sequence specificity. Involved in development of the eye and of primordial germ cells. This is Pumilio homolog 3 from Rattus norvegicus (Rat).